The sequence spans 348 residues: Ferrochelatase (348 aa).

2 residues coordinate Fe cation: His218 and Glu299.

This sequence belongs to the ferrochelatase family.

It is found in the cytoplasm. It catalyses the reaction heme b + 2 H(+) = protoporphyrin IX + Fe(2+). It participates in porphyrin-containing compound metabolism; protoheme biosynthesis; protoheme from protoporphyrin-IX: step 1/1. Its function is as follows. Catalyzes the ferrous insertion into protoporphyrin IX. The sequence is that of Ferrochelatase from Methylocella silvestris (strain DSM 15510 / CIP 108128 / LMG 27833 / NCIMB 13906 / BL2).